Here is a 274-residue protein sequence, read N- to C-terminus: Transcription factor Ovo-like 2 (274 aa).

Basic residues predominate over residues 1-11 (MPKVFLVKRRS). The segment at 1–88 (MPKVFLVKRR…ETPELHDAQG (88 aa)) is disordered. Residues 18–29 (SWDELPDDKRAD) are compositionally biased toward basic and acidic residues. The segment covering 50 to 74 (DGGSSSGCSSSAGEPGGAESSSSPR) has biased composition (low complexity). C2H2-type zinc fingers lie at residues 118–140 (HNCD…LKCH), 146–168 (HLCT…VRTH), 174–197 (YKCE…KKIH), and 213–236 (YVCE…NSDH). S268 bears the Phosphoserine mark.

It belongs to the krueppel C2H2-type zinc-finger protein family. In terms of assembly, interacts (via zinc-finger domains) with CEBPA (via bZIP domain); the interaction inhibits the transcription factor activity of CEBPA and is required to repress adipogenesis. Expressed highly in testis, specifically in spermatocytes. Expressed also in skin and at lower levels in the ovary. Expressed in adipose tissues. Expression is lower than in testis and a relatively higher expression level is detected in the stromal vascular fraction (SVF) than in fat cells themselves.

It is found in the nucleus. In terms of biological role, zinc-finger transcription repressor factor. Plays a critical role in maintaining the identity of epithelial lineages by suppressing epithelial-to mesenchymal transition (EMT) mainly through the repression of ZEB1, an EMT inducer. Positively regulates neuronal differentiation. Suppresses cell cycling and terminal differentiation of keratinocytes by directly repressing MYC and NOTCH1. Important for the correct development of primordial germ cells in embryos. Plays dual functions in thermogenesis and adipogenesis to maintain energy balance. Essential for brown/beige adipose tissue-mediated thermogenesis, is necessary for the development of brown adipocytes. In white adipose tissues, limits adipogenesis by blocking CEBPA binding to its transcriptional targets and inhibiting its transcription factor activity. The polypeptide is Transcription factor Ovo-like 2 (Mus musculus (Mouse)).